The following is a 385-amino-acid chain: GTP cyclohydrolase-2 (385 aa).

The tract at residues 1–189 is DHBP synthase-like; sequence MYADAPSDSA…RDIADYRVHV (189 aa). Positions 190 to 385 are GTP cyclohydrolase II; it reads VRTLRRVAEA…TKAERSGHMF (196 aa). 240–244 contacts GTP; the sequence is RLHSE. Zn(2+)-binding residues include Cys245, Cys256, and Cys258. Residues Gln261, 283 to 285, and Thr305 contribute to the GTP site; that span reads EGR. Asp317 (proton acceptor) is an active-site residue. Arg319 serves as the catalytic Nucleophile. 2 residues coordinate GTP: Thr340 and Lys345.

This sequence in the N-terminal section; belongs to the DHBP synthase family. In the C-terminal section; belongs to the GTP cyclohydrolase II family. Zn(2+) serves as cofactor.

The catalysed reaction is GTP + 4 H2O = 2,5-diamino-6-hydroxy-4-(5-phosphoribosylamino)-pyrimidine + formate + 2 phosphate + 3 H(+). It functions in the pathway cofactor biosynthesis; riboflavin biosynthesis; 5-amino-6-(D-ribitylamino)uracil from GTP: step 1/4. Its function is as follows. Catalyzes the conversion of GTP to 2,5-diamino-6-ribosylamino-4(3H)-pyrimidinone 5'-phosphate (DARP), formate and pyrophosphate. The sequence is that of GTP cyclohydrolase-2 (ribA) from Azospirillum brasilense.